We begin with the raw amino-acid sequence, 287 residues long: UPF0276 protein ACIAD0933 (287 aa).

This sequence belongs to the UPF0276 family.

The chain is UPF0276 protein ACIAD0933 from Acinetobacter baylyi (strain ATCC 33305 / BD413 / ADP1).